A 164-amino-acid polypeptide reads, in one-letter code: MAENGAAEGTAQQPQVQMNILGQFIRDLSFENVMAQKGVGGEVQPDVNVQVALDAKKRSTENQYEVITKLNIESKNKAGGEVLFVLELEYVGIFNIAGVPEDQLHPFLLIECPRMLFPFLRRIVSDISRDGGFPPLNLDNIDFVAIYRNELARRQAEAPAEVTN.

The protein belongs to the SecB family. As to quaternary structure, homotetramer, a dimer of dimers. One homotetramer interacts with 1 SecA dimer.

The protein resides in the cytoplasm. In terms of biological role, one of the proteins required for the normal export of preproteins out of the cell cytoplasm. It is a molecular chaperone that binds to a subset of precursor proteins, maintaining them in a translocation-competent state. It also specifically binds to its receptor SecA. The polypeptide is Protein-export protein SecB (Ruegeria sp. (strain TM1040) (Silicibacter sp.)).